The following is a 151-amino-acid chain: Ribosome maturation factor RimP (151 aa).

Belongs to the RimP family.

Its subcellular location is the cytoplasm. In terms of biological role, required for maturation of 30S ribosomal subunits. The protein is Ribosome maturation factor RimP of Nitrosococcus oceani (strain ATCC 19707 / BCRC 17464 / JCM 30415 / NCIMB 11848 / C-107).